Consider the following 426-residue polypeptide: Phosphomethylpyrimidine synthase (426 aa).

Substrate contacts are provided by residues Asn-65, Met-94, Tyr-123, His-162, 184–186 (SRG), 225–228 (DGMR), and Glu-264. His-268 is a binding site for Zn(2+). Residue Tyr-291 coordinates substrate. Residue His-332 participates in Zn(2+) binding. Positions 408, 411, and 415 each coordinate [4Fe-4S] cluster.

This sequence belongs to the ThiC family. [4Fe-4S] cluster serves as cofactor.

It carries out the reaction 5-amino-1-(5-phospho-beta-D-ribosyl)imidazole + S-adenosyl-L-methionine = 4-amino-2-methyl-5-(phosphooxymethyl)pyrimidine + CO + 5'-deoxyadenosine + formate + L-methionine + 3 H(+). It participates in cofactor biosynthesis; thiamine diphosphate biosynthesis. In terms of biological role, catalyzes the synthesis of the hydroxymethylpyrimidine phosphate (HMP-P) moiety of thiamine from aminoimidazole ribotide (AIR) in a radical S-adenosyl-L-methionine (SAM)-dependent reaction. In Methanococcus maripaludis (strain C6 / ATCC BAA-1332), this protein is Phosphomethylpyrimidine synthase.